The following is a 207-amino-acid chain: UPF0328 protein ECU02_1590/ECU04_0060/ECU08_2120 (207 aa).

Disordered stretches follow at residues 1–154 (MPRP…HSHT) and 180–207 (GRLHGSPTKGAQTAQQAQPHPPKQLATL). Basic and acidic residues-rich tracts occupy residues 14–24 (DHPDFRSESSA) and 75–97 (HTEGCHTHEANPEPNTKHTETES). Composition is skewed to polar residues over residues 98-121 (PKPQTSTQHHTPITIPSSLLSQNT) and 133-149 (SRPSTIPANTYQPQSPH).

The protein belongs to the UPF0328 family.

The polypeptide is UPF0328 protein ECU02_1590/ECU04_0060/ECU08_2120 (Encephalitozoon cuniculi (strain GB-M1) (Microsporidian parasite)).